The primary structure comprises 247 residues: ATP synthase subunit a, chloroplastic (247 aa).

The next 5 helical transmembrane spans lie at 38–58 (QVLI…AIAV), 95–115 (VPFI…GALL), 134–154 (INTT…AGLT), 199–219 (LVVV…VMFL), and 220–240 (GLFT…AYIG).

The protein belongs to the ATPase A chain family. F-type ATPases have 2 components, CF(1) - the catalytic core - and CF(0) - the membrane proton channel. CF(1) has five subunits: alpha(3), beta(3), gamma(1), delta(1), epsilon(1). CF(0) has four main subunits: a, b, b' and c.

Its subcellular location is the plastid. It localises to the chloroplast thylakoid membrane. Functionally, key component of the proton channel; it plays a direct role in the translocation of protons across the membrane. In Calycanthus floridus var. glaucus (Eastern sweetshrub), this protein is ATP synthase subunit a, chloroplastic.